The primary structure comprises 166 residues: UPF0178 protein BPUM_2255 (166 aa).

Belongs to the UPF0178 family.

The sequence is that of UPF0178 protein BPUM_2255 from Bacillus pumilus (strain SAFR-032).